The primary structure comprises 119 residues: MSNITYEFNENDVIVNNNGMPCIQRPFDKEALYSLLDKMSKEQLDELIEDINDEKRLREFKEEKLKKVRSRMNRELKIYKQELENKKQRMKMLTEQEEEEEEEEEEPPKPKKKVINRKK.

A disordered region spans residues 86–119 (KKQRMKMLTEQEEEEEEEEEEPPKPKKKVINRKK). A compositionally biased stretch (acidic residues) spans 95-106 (EQEEEEEEEEEE). The span at 110–119 (PKKKVINRKK) shows a compositional bias: basic residues.

This is an uncharacterized protein from Sputnik virophage.